Consider the following 227-residue polypeptide: Ribosomal RNA small subunit methyltransferase G (227 aa).

Residues glycine 74, leucine 79, 124–125 (AE), and arginine 142 contribute to the S-adenosyl-L-methionine site.

The protein belongs to the methyltransferase superfamily. RNA methyltransferase RsmG family.

The protein resides in the cytoplasm. Functionally, specifically methylates the N7 position of guanine in position 518 of 16S rRNA. The protein is Ribosomal RNA small subunit methyltransferase G of Mycolicibacterium vanbaalenii (strain DSM 7251 / JCM 13017 / BCRC 16820 / KCTC 9966 / NRRL B-24157 / PYR-1) (Mycobacterium vanbaalenii).